The chain runs to 106 residues: Nucleoid-associated protein Rpal_0620 (106 aa).

The protein belongs to the YbaB/EbfC family. As to quaternary structure, homodimer.

It is found in the cytoplasm. It localises to the nucleoid. Functionally, binds to DNA and alters its conformation. May be involved in regulation of gene expression, nucleoid organization and DNA protection. This is Nucleoid-associated protein Rpal_0620 from Rhodopseudomonas palustris (strain TIE-1).